Here is a 502-residue protein sequence, read N- to C-terminus: Cytochrome P450 CYP94D109 (502 aa).

A helical membrane pass occupies residues 3-23; the sequence is SLSLIFISFITLIVFLVVSAS. Position 437 (C437) interacts with heme.

The protein belongs to the cytochrome P450 family. Mainly expressed in leaves and, at low levels, in roots, fruits and stems.

Its subcellular location is the membrane. It participates in steroid metabolism; cholesterol metabolism. Its function is as follows. Involved in the biosynthesis of spiroketal steroid and saponin natural products from cholesterol such as diosgenin and analogs (e.g. furostanol and spirostanol), plant defense compounds used as main precursors for the industrial production of steroid hormones. During the 5,6-spiroketalization of cholesterol, may catalyze the 27-monohydroxylation of furostanol-type steroid to an intermediate product that undergoes a stereospecific formation of the terminal heterocycle to yield diosgenin. The polypeptide is Cytochrome P450 CYP94D109 (Paris polyphylla (Daiswa polyphylla)).